The primary structure comprises 697 residues: DNA ligase (697 aa).

NAD(+)-binding positions include 36 to 40 (DAEYD), 85 to 86 (SL), and E123. K125 serves as the catalytic N6-AMP-lysine intermediate. NAD(+) is bound by residues R146, E182, K320, and K344. Residues C438, C441, C456, and C462 each contribute to the Zn(2+) site. One can recognise a BRCT domain in the interval 619-697 (PQGNTLAGKT…EDGLKALLGV (79 aa)).

Belongs to the NAD-dependent DNA ligase family. LigA subfamily. Mg(2+) is required as a cofactor. The cofactor is Mn(2+).

The catalysed reaction is NAD(+) + (deoxyribonucleotide)n-3'-hydroxyl + 5'-phospho-(deoxyribonucleotide)m = (deoxyribonucleotide)n+m + AMP + beta-nicotinamide D-nucleotide.. In terms of biological role, DNA ligase that catalyzes the formation of phosphodiester linkages between 5'-phosphoryl and 3'-hydroxyl groups in double-stranded DNA using NAD as a coenzyme and as the energy source for the reaction. It is essential for DNA replication and repair of damaged DNA. The polypeptide is DNA ligase (Bordetella petrii (strain ATCC BAA-461 / DSM 12804 / CCUG 43448)).